The following is a 331-amino-acid chain: Ketol-acid reductoisomerase (NADP(+)) (331 aa).

A KARI N-terminal Rossmann domain is found at 2-182 (ARMYYDTDAN…GGTRAGILET (181 aa)). Residues 25-28 (YGSQ), Ser-51, Ser-53, and 83-86 (DEVQ) contribute to the NADP(+) site. Residue His-108 is part of the active site. Gly-134 provides a ligand contact to NADP(+). The region spanning 183 to 328 (TFREETETDL…KDLRAMFSWL (146 aa)) is the KARI C-terminal knotted domain. Mg(2+)-binding residues include Asp-191, Glu-195, Glu-227, and Glu-231. Ser-252 serves as a coordination point for substrate.

The protein belongs to the ketol-acid reductoisomerase family. Mg(2+) is required as a cofactor.

It catalyses the reaction (2R)-2,3-dihydroxy-3-methylbutanoate + NADP(+) = (2S)-2-acetolactate + NADPH + H(+). The enzyme catalyses (2R,3R)-2,3-dihydroxy-3-methylpentanoate + NADP(+) = (S)-2-ethyl-2-hydroxy-3-oxobutanoate + NADPH + H(+). The protein operates within amino-acid biosynthesis; L-isoleucine biosynthesis; L-isoleucine from 2-oxobutanoate: step 2/4. It participates in amino-acid biosynthesis; L-valine biosynthesis; L-valine from pyruvate: step 2/4. Involved in the biosynthesis of branched-chain amino acids (BCAA). Catalyzes an alkyl-migration followed by a ketol-acid reduction of (S)-2-acetolactate (S2AL) to yield (R)-2,3-dihydroxy-isovalerate. In the isomerase reaction, S2AL is rearranged via a Mg-dependent methyl migration to produce 3-hydroxy-3-methyl-2-ketobutyrate (HMKB). In the reductase reaction, this 2-ketoacid undergoes a metal-dependent reduction by NADPH to yield (R)-2,3-dihydroxy-isovalerate. In Rippkaea orientalis (strain PCC 8801 / RF-1) (Cyanothece sp. (strain PCC 8801)), this protein is Ketol-acid reductoisomerase (NADP(+)).